The primary structure comprises 37 residues: Large ribosomal subunit protein bL36 (37 aa).

The protein belongs to the bacterial ribosomal protein bL36 family.

The polypeptide is Large ribosomal subunit protein bL36 (Ureaplasma parvum serovar 3 (strain ATCC 27815 / 27 / NCTC 11736)).